We begin with the raw amino-acid sequence, 922 residues long: Dual serine/threonine and tyrosine protein kinase (922 aa).

The Protein kinase domain occupies 645–899; that stretch reads PKLGRELGRG…PLLGIVEPSL (255 aa). ATP contacts are provided by residues 651–659 and Lys674; that span reads LGRGQYGVV. Asp770 serves as the catalytic Proton acceptor.

Belongs to the protein kinase superfamily. Ser/Thr protein kinase family.

It is found in the cytoplasm. It localises to the cell membrane. The protein localises to the apical cell membrane. The protein resides in the basolateral cell membrane. Its subcellular location is the cell junction. The catalysed reaction is L-seryl-[protein] + ATP = O-phospho-L-seryl-[protein] + ADP + H(+). It carries out the reaction L-threonyl-[protein] + ATP = O-phospho-L-threonyl-[protein] + ADP + H(+). It catalyses the reaction L-tyrosyl-[protein] + ATP = O-phospho-L-tyrosyl-[protein] + ADP + H(+). Functionally, may act as a positive regulator of ERK phosphorylation downstream of fibroblast growth factor-receptor activation. May induce both caspase-dependent apoptosis and caspase-independent cell death. May play a role in the embryonic development. The chain is Dual serine/threonine and tyrosine protein kinase from Tetraodon nigroviridis (Spotted green pufferfish).